The chain runs to 84 residues: Agaphelin (84 aa).

The N-terminal stretch at 1–26 (MKMRVHLLAVSVLLVVLALQTTPAEA) is a signal peptide. The region spanning 29–82 (NSEMATCACQLIYRPVCASNNESYSNECVLKCASETPTGRSIGLHKVKDGNCNG) is the Kazal-like domain. 3 disulfide bridges follow: cysteine 35/cysteine 60, cysteine 37/cysteine 56, and cysteine 45/cysteine 80. N-linked (GlcNAc...) asparagine glycosylation occurs at asparagine 49.

As to quaternary structure, interacts with human ELANE.

Its subcellular location is the secreted. Functions as a slow and tight inhibitor of host neutrophil elastase (ELANE). Inhibits host proteinase 3 (PRTN3) and chymotrypsin. Does not inhibit other host proteases involved in coagulation or inflammation, such as cathepsin G (CTSG), trypsin, chymase, matriptase, beta-tryptase, kallikrein, urokinase-type plasminogen activator (PLAU), coagulation factors Xa (F10), XIa (F11), XIIa (F12), plasmin (PLG), thrombin (F2) and tissue-type plasminogen activator (PLAT). Inhibits host neutrophil chemotaxis induced by N-formylmethionine-leucyl-phenylalanine (fMLP) in vitro. Inhibits ELANE-mediated potentiation of platelet aggregation induced by CTSG in the host. Does not affect CTSG- or collagen-induced platelet aggregation. Blocks cleavage of tissue factor pathway inhibitor (TFPI) by ELANE in the host. Inhibits neutrophil-induced coagulation in the host by interfering with neutrophil extracellular traps (NET) formation. Exhibits anti-inflammatory activity. Reduces ischemia-induced activation of MAPK and NF-kappa-B pathways in the host. Decreases CCL2 and IL8 production in IL4- or lipopolysaccharide (LPS)-stimulated host epithelial cells. Reduces caspase-3 (CASP3)-dependent apoptosis in damaged host tissues. In Anopheles gambiae (African malaria mosquito), this protein is Agaphelin.